The sequence spans 212 residues: Fibrillarin-like rRNA/tRNA 2'-O-methyltransferase (212 aa).

A disordered region spans residues 1 to 37 (MSEPNLPAGVERREIGGETRLATRGPPVYGEPTADGW). S-adenosyl-L-methionine is bound by residues 74 to 75 (TT), 90 to 91 (EF), 115 to 116 (DA), and 136 to 139 (DVAT).

This sequence belongs to the methyltransferase superfamily. Fibrillarin family. As to quaternary structure, interacts with nop5. Component of box C/D small ribonucleoprotein (sRNP) particles that contain rpl7ae, FlpA and nop5, plus a guide RNA.

Involved in pre-rRNA and tRNA processing. Utilizes the methyl donor S-adenosyl-L-methionine to catalyze the site-specific 2'-hydroxyl methylation of ribose moieties in rRNA and tRNA. Site specificity is provided by a guide RNA that base pairs with the substrate. Methylation occurs at a characteristic distance from the sequence involved in base pairing with the guide RNA. In Halorubrum lacusprofundi (strain ATCC 49239 / DSM 5036 / JCM 8891 / ACAM 34), this protein is Fibrillarin-like rRNA/tRNA 2'-O-methyltransferase.